Consider the following 311-residue polypeptide: Probable manganese-dependent inorganic pyrophosphatase (311 aa).

Residues His-9, Asp-13, Asp-15, Asp-77, His-99, and Asp-151 each contribute to the Mn(2+) site.

It belongs to the PPase class C family. Mn(2+) serves as cofactor.

Its subcellular location is the cytoplasm. It catalyses the reaction diphosphate + H2O = 2 phosphate + H(+). In Streptococcus pneumoniae (strain JJA), this protein is Probable manganese-dependent inorganic pyrophosphatase.